We begin with the raw amino-acid sequence, 865 residues long: Chitin synthase 3 (865 aa).

The interval 1–59 (MASQYPGHQLDDIPSTNVYRPPPRHEDDEAEHALLHQNSAYQSQYDDPHSRPLTPGQES) is disordered. Basic and acidic residues predominate over residues 23–34 (PRHEDDEAEHAL). Positions 36–45 (HQNSAYQSQY) are enriched in polar residues. Asn64, Asn95, and Asn538 each carry an N-linked (GlcNAc...) asparagine glycan. Helical transmembrane passes span 565–585 (FFLH…WFSL), 620–640 (IINT…FILA), and 650–670 (VAYI…IVLS). N-linked (GlcNAc...) asparagine glycosylation is present at Asn682. A run of 3 helical transmembrane segments spans residues 707 to 727 (IVII…FLYM), 735 to 755 (SFAQ…IYAF), and 837 to 857 (LVAT…SDSL).

Belongs to the chitin synthase family. Class III subfamily.

It is found in the cell membrane. The catalysed reaction is [(1-&gt;4)-N-acetyl-beta-D-glucosaminyl](n) + UDP-N-acetyl-alpha-D-glucosamine = [(1-&gt;4)-N-acetyl-beta-D-glucosaminyl](n+1) + UDP + H(+). Its function is as follows. Polymerizes chitin, a structural polymer of the cell wall and septum, by transferring the sugar moiety of UDP-GlcNAc to the non-reducing end of the growing chitin polymer. Is not only stable at different pH, but is also able to tolerate a broad temperature range. With CHS2, plays an important role in virulence. The sequence is that of Chitin synthase 3 from Exophiala dermatitidis (strain ATCC 34100 / CBS 525.76 / NIH/UT8656) (Black yeast).